We begin with the raw amino-acid sequence, 120 residues long: A-type ATP synthase subunit F (120 aa).

This sequence belongs to the V-ATPase F subunit family. In terms of assembly, has multiple subunits with at least A(3), B(3), C, D, E, F, H, I and proteolipid K(x).

The protein resides in the cell membrane. In terms of biological role, component of the A-type ATP synthase that produces ATP from ADP in the presence of a proton gradient across the membrane. The protein is A-type ATP synthase subunit F of Halobacterium salinarum (strain ATCC 29341 / DSM 671 / R1).